An 83-amino-acid polypeptide reads, in one-letter code: Small ribosomal subunit protein bS16 (83 aa).

Belongs to the bacterial ribosomal protein bS16 family.

The sequence is that of Small ribosomal subunit protein bS16 from Pseudomonas putida (strain ATCC 700007 / DSM 6899 / JCM 31910 / BCRC 17059 / LMG 24140 / F1).